The primary structure comprises 608 residues: ESX-3 secretion system protein EccA3 (608 aa).

The tract at residues 284–303 (EARSDPWDPETEPSEAEFVD) is disordered. The span at 290–301 (WDPETEPSEAEF) shows a compositional bias: acidic residues. 365-372 (GPPGTGKT) lines the ATP pocket.

It belongs to the CbxX/CfxQ family. In terms of assembly, part of the ESX-3 / type VII secretion system (T7SS), which is composed of cytosolic and membrane components.

Its subcellular location is the cytoplasm. Functionally, part of the ESX-3 specialized secretion system, which is required for siderophore-mediated iron acquisition and for the secretion of EsxH and EsxG. EccA3 exhibits ATPase activity and may provide energy for the export of ESX-3 substrates. This chain is ESX-3 secretion system protein EccA3, found in Mycolicibacterium smegmatis (strain ATCC 700084 / mc(2)155) (Mycobacterium smegmatis).